A 785-amino-acid polypeptide reads, in one-letter code: Sexual differentiation process protein isp4 (785 aa).

The interval 1–28 (MIGSINESPIEEHMNDSPSTKEKADSVD) is disordered. A compositionally biased stretch (basic and acidic residues) spans 10–26 (IEEHMNDSPSTKEKADS). A run of 16 helical transmembrane segments spans residues 94-114 (MWTI…FFSL), 121-141 (LSVL…DLIF), 167-187 (LIVV…IILA), 196-216 (FGFG…YGLA), 264-284 (FFLY…YIFQ), 339-359 (LMNI…ALNF), 413-433 (ALAF…VILY), 461-481 (VPFY…MGTI), 490-510 (WWVI…IGIV), 512-532 (AITN…GYMY), 537-557 (LAMM…LAFA), 572-592 (IMFY…IGVL), 611-631 (YTCP…VIGP), 642-662 (TGLQ…WALW), 683-703 (GYIP…GLFF), and 732-752 (LSVI…PDWW).

It belongs to the oligopeptide OPT transporter family.

Its subcellular location is the endoplasmic reticulum membrane. The sequence is that of Sexual differentiation process protein isp4 (isp4) from Schizosaccharomyces pombe (strain 972 / ATCC 24843) (Fission yeast).